The following is a 520-amino-acid chain: GMP synthase [glutamine-hydrolyzing] (520 aa).

The Glutamine amidotransferase type-1 domain maps to 12–205; it reads KIIVLDYGSQ…AISICGARGD (194 aa). The Nucleophile role is filled by Cys89. Catalysis depends on residues His179 and Glu181. The region spanning 206-395 is the GMPS ATP-PPase domain; sequence WSMDNFIDME…LGMPEEIVWR (190 aa). 233–239 contributes to the ATP binding site; the sequence is SGGVDSS.

Homodimer.

The enzyme catalyses XMP + L-glutamine + ATP + H2O = GMP + L-glutamate + AMP + diphosphate + 2 H(+). Its pathway is purine metabolism; GMP biosynthesis; GMP from XMP (L-Gln route): step 1/1. Catalyzes the synthesis of GMP from XMP. The protein is GMP synthase [glutamine-hydrolyzing] of Streptococcus pyogenes serotype M2 (strain MGAS10270).